The sequence spans 700 residues: Sex comb on midleg-like protein 2 (700 aa).

A disordered region spans residues 1 to 33; it reads MGQTVNEDSMDVKKENQEKTPQSSTSSVQRDDF. Residues 19–28 show a composition bias toward polar residues; that stretch reads KTPQSSTSSV. MBT repeat units follow at residues 33–131 and 139–240; these read FHWE…LQPP and SSWP…LQPP. Polar residues predominate over residues 253 to 281; sequence TESSPSEASQHSMQSPQKTTLILPTQQVR. Disordered stretches follow at residues 253-320 and 466-550; these read TESS…EKPL and PFSS…SSLN. Serine 256, serine 261, serine 267, serine 299, and serine 300 each carry phosphoserine. Position 305 is a phosphothreonine (threonine 305). A compositionally biased stretch (basic and acidic residues) spans 476-495; the sequence is SSAEHDKNQSAKEDVTERQS. Serine 499 carries the phosphoserine modification. Residue threonine 503 is modified to Phosphothreonine. Serine 511 is subject to Phosphoserine. Lysine 518 participates in a covalent cross-link: Glycyl lysine isopeptide (Lys-Gly) (interchain with G-Cter in SUMO2). Position 522 is a phosphoserine (serine 522). Residues 535–545 are compositionally biased toward basic and acidic residues; sequence PKEENLSEDSK. Lysine 536 is covalently cross-linked (Glycyl lysine isopeptide (Lys-Gly) (interchain with G-Cter in SUMO2)). Phosphoserine occurs at positions 570, 583, 590, and 594. Residues 575-584 are compositionally biased toward polar residues; sequence RSVPGTTSSP. The interval 575–594 is disordered; it reads RSVPGTTSSPLVGDISPKSS. Residues lysine 599 and lysine 605 each participate in a glycyl lysine isopeptide (Lys-Gly) (interchain with G-Cter in SUMO2) cross-link. One can recognise an SAM domain in the interval 631–700; sequence WSVDEVIQFM…IEKLKEGKYS (70 aa).

This sequence belongs to the SCM family. In terms of tissue distribution, highly expressed in placenta, thymus and testis. Detected at lower levels in brain, liver, skeletal muscle, pancreas and ovary.

The protein localises to the nucleus. Putative Polycomb group (PcG) protein. PcG proteins act by forming multiprotein complexes, which are required to maintain the transcriptionally repressive state of homeotic genes throughout development. This Homo sapiens (Human) protein is Sex comb on midleg-like protein 2 (SCML2).